Consider the following 81-residue polypeptide: Photosystem I iron-sulfur center (81 aa).

2 consecutive 4Fe-4S ferredoxin-type domains span residues 2–31 (SHSV…MIPW) and 39–68 (IASA…VRVY). Residues C11, C14, C17, C21, C48, C51, C54, and C58 each contribute to the [4Fe-4S] cluster site.

In terms of assembly, the eukaryotic PSI reaction center is composed of at least 11 subunits. It depends on [4Fe-4S] cluster as a cofactor.

Its subcellular location is the plastid. It is found in the chloroplast thylakoid membrane. The enzyme catalyses reduced [plastocyanin] + hnu + oxidized [2Fe-2S]-[ferredoxin] = oxidized [plastocyanin] + reduced [2Fe-2S]-[ferredoxin]. Apoprotein for the two 4Fe-4S centers FA and FB of photosystem I (PSI); essential for photochemical activity. FB is the terminal electron acceptor of PSI, donating electrons to ferredoxin. The C-terminus interacts with PsaA/B/D and helps assemble the protein into the PSI complex. Required for binding of PsaD and PsaE to PSI. PSI is a plastocyanin-ferredoxin oxidoreductase, converting photonic excitation into a charge separation, which transfers an electron from the donor P700 chlorophyll pair to the spectroscopically characterized acceptors A0, A1, FX, FA and FB in turn. This chain is Photosystem I iron-sulfur center, found in Triticum aestivum (Wheat).